The following is a 134-amino-acid chain: Thionin-2.1 (134 aa).

A signal peptide spans 1–24; that stretch reads MKGRILILSLLIMSLVMAQVQVEA. Intrachain disulfides connect C27/C61, C28/C55, and C40/C49. A propeptide spans 68 to 134 (acidic domain); the sequence is AILENSADAT…VVPPGPPKLL (67 aa).

The protein belongs to the plant thionin (TC 1.C.44) family. In terms of tissue distribution, detected in rosette leaves and at a very high level in flowers and in siliques.

The protein resides in the secreted. Seems to function as a defense factor. Thionins are small plant proteins which are toxic to animal cells. They seem to exert their toxic effect at the level of the cell membrane. Their precise function is not known. This chain is Thionin-2.1 (THI2.1), found in Arabidopsis thaliana (Mouse-ear cress).